The primary structure comprises 143 residues: Large ribosomal subunit protein uL11 (143 aa).

Belongs to the universal ribosomal protein uL11 family. Part of the ribosomal stalk of the 50S ribosomal subunit. Interacts with L10 and the large rRNA to form the base of the stalk. L10 forms an elongated spine to which L12 dimers bind in a sequential fashion forming a multimeric L10(L12)X complex. One or more lysine residues are methylated.

In terms of biological role, forms part of the ribosomal stalk which helps the ribosome interact with GTP-bound translation factors. The chain is Large ribosomal subunit protein uL11 from Burkholderia multivorans (strain ATCC 17616 / 249).